The primary structure comprises 174 residues: Transcription factor bHLH168 (174 aa).

The bHLH domain maps to Ser-14–Leu-63.

Belongs to the bHLH protein family.

It is found in the nucleus. The protein is Transcription factor bHLH168 of Arabidopsis thaliana (Mouse-ear cress).